Consider the following 247-residue polypeptide: ATP synthase subunit a (247 aa).

6 consecutive transmembrane segments (helical) span residues 23-43 (ISFTNSSAMMVLSICLITLFL), 90-110 (LFMFVLFGNLLGMMPIPVIGF), 116-136 (VIVTFAMALVVFVGVTVIGFA), 145-165 (MFFPHGAPIATAVILIPIELI), 194-214 (GFVVSLGAFYLIPGAVPFAFL), and 215-235 (SAITVLEFGIALLQAYVFTIL).

This sequence belongs to the ATPase A chain family. As to quaternary structure, F-type ATPases have 2 components, CF(1) - the catalytic core - and CF(0) - the membrane proton channel. CF(1) has five subunits: alpha(3), beta(3), gamma(1), delta(1), epsilon(1). CF(0) has three main subunits: a(1), b(2) and c(9-12). The alpha and beta chains form an alternating ring which encloses part of the gamma chain. CF(1) is attached to CF(0) by a central stalk formed by the gamma and epsilon chains, while a peripheral stalk is formed by the delta and b chains.

It localises to the cell inner membrane. Its function is as follows. Key component of the proton channel; it plays a direct role in the translocation of protons across the membrane. This chain is ATP synthase subunit a, found in Paramagnetospirillum magneticum (strain ATCC 700264 / AMB-1) (Magnetospirillum magneticum).